The sequence spans 504 residues: Serine O-succinyltransferase (504 aa).

The transit peptide at 1 to 26 (MLRASSKRLQLSWQVFRRFQSSNPQL) directs the protein to the mitochondrion. Residues 49-70 (QACPNSVDPSASITSPSLSSGP) form a disordered region. A compositionally biased stretch (low complexity) spans 57–70 (PSASITSPSLSSGP). One can recognise an AB hydrolase-1 domain in the interval 117–395 (NAILLHTGLS…SAEEIIKLNE (279 aa)). The interval 124–127 (GLSA) is important for substrate specificity. Residue S221 is the Nucleophile of the active site. Substrate is bound at residue R290. Active-site residues include D443 and H480. Residue D481 coordinates substrate.

It belongs to the AB hydrolase superfamily. MetX family.

Its subcellular location is the mitochondrion. It carries out the reaction succinyl-CoA + L-serine = O-succinyl-L-serine + CoA. Its pathway is amino-acid biosynthesis; L-cysteine biosynthesis; L-cysteine from L-serine: step 1/2. Functionally, transfers a succinyl group from succinyl-CoA to L-serine, forming succinyl-L-serine. Also has weak serine acetyl transferase activity and homoserine succinyl transferase activity. In Schizosaccharomyces pombe (strain 972 / ATCC 24843) (Fission yeast), this protein is Serine O-succinyltransferase.